Here is a 203-residue protein sequence, read N- to C-terminus: Thymidylate kinase (203 aa).

Position 10 to 17 (G10 to S17) interacts with ATP.

Belongs to the thymidylate kinase family.

The catalysed reaction is dTMP + ATP = dTDP + ADP. Its function is as follows. Phosphorylation of dTMP to form dTDP in both de novo and salvage pathways of dTTP synthesis. The sequence is that of Thymidylate kinase from Methylobacillus flagellatus (strain ATCC 51484 / DSM 6875 / VKM B-1610 / KT).